The sequence spans 3677 residues: MLWWEEVEDCYEREDVQKKTFTKWINAQFSKFGKQHIDNLFSDLQDGKRLLDLLEGLTGQKLPKEKGSTRVHALNNVNKALQVLQKNNVDLVNIGSTDIVDGNHKLTLGLIWNIILHWQVKNVMKTIMAGLQQTNSEKILLSWVRESTRNYPQVNVLNFTSSWSDGLALNALIHSHRPDLFDWNSVVSQQSATQRLEHAFNIAKCQLGIEKLLDPEDVATTYPDKKSILMYITSLFQVLPQQVSIEAIREVEMLPRPSKVTREEHFQLHHQMHYSQQITVSLAQGYEQTSSSPKPRFKSYAFTQAAYVATSDSSQSPYPSQHLEAPGSKSFGSSLIETEVNLDSYQTALEEVLSWLLSAEDTLRAQGEISKDVEEVKEQFHAHEGFMMDLTSHQGLVGNVLQLGSRLVGKGKLTEDEETEVQEQMNLLNSRWECLRVASMEKQSNLHKVLMDLQNQKLKELDDWLTKTEERTKKMEEEPLGPDLEDLKCQVQQHKVLQEDLEQEQVRVNSLTHMVVVVDESSGDHATAALEEQLKVLGDRWANICKWTEDRWILLQDILLKWQRFTEEQCLFSKWLSEKEDAMKNIQTSGFEDQNEMVSSLQNISALKIDLEKKKQSMEKLSSLNQDLLSALKNKSVTQKMEMWMENFAQRWDNLTQKLEKSSAQISQAVTTTQPSLTQTTVMETVTMVTTREQIMVKHAQEELPPPPPQKKRQITVDSEIRKRLDVDITELHSWITRSEAVLQSSEFAVYRKEGNISDLKEKVNAIAREKAEKFRKLQDASRSAQALVEQMVNEGVNAESIRQASEQLNSRWTEFCQLLSERVNWLEYQNNIITFYNQLQQLEQMTTTAENLLKTQPTTLSEPTAIKSQLKICKDEVNRLSALQPQIERLKIQSLTLKEKGQGPMFLDADFVAFTNHFNYVFDGVRAREKELQTIFDTLPPMRYQETMSSIRTWIQQSENKLSIPHLSVTEYEIMEERLGKLQALQSSLKEQQNGFNYLNATVKEIAKKAPSEISQKYQSEFEEVEGRWKKLSTQLVEHCQKLEEHMNKLRKFQNHKKTLQKWMAEVDVFLKEEWPALGDAEILKKQLKQCRLLVGDIQTIQPSLNSVNEGGQKIKSEAEFEFASRLEKELKELNTQWDHICRQVYTRKEALKAGLDKTVSLQKDLSEMHEWMTQAEEEYLERDFEYKTPDELQTAVEEMKRAKEEALQKEAKVKLLTETVNSVISQAPPAAQEALKKELETLTTNYQWLCTRLNGKCKTLEEVWACWHELLSYLEKANKWLNEVELKLKATENVPAGAEEITEVLESLENLMHHSEENPNQIRLLAQTLTDGGVMDELINEELETFNSRWRELHEEAVRKQKLLEQSIQSAQEIEKSLHLIQESLEFIDKQLAAYIADKVDAAQMPQEAQKIQSDLTSHEISLEEMKKHNQGKDANQRVLSQIDVAQKKLQDVSIKFRLFQKPANFEQRLEESKMILDEVKMHLPALETKSVEQEVVQSQLSHCVNLYKSLSEVKSEVEMVIKTGRQIVQKKQTENPKELDERVTALKLHYNELGAKVTERKQQLEKCLKLSRKMRKEMNVLTEWLAATDTELTKRSAVEGMPSNLDSEVAWGKATQKEIEKQKAHLKSVTELGDSLKTVLGKKETLVEDKLTLLNSNWIAVTSRVEEWLNLLLEYQKHMESFDQNVEHITKWIIHTDELLDESEKRKPQQKEDILKRLKAEMNDIRPKVDATRDQAAKLMANRGDYCRKIVEPQISELNRRFAAISHRIKTGKASIPLKELEQFNSDIQKLLEPLEAEIQQGVNLKEEDFNKDMSEDNEGTVNELLQRGDNLQQRITDERKREEIKLKQQLLQTKHNALKDLRSQRRKKALEISHQWYQYKSQADDLLKCLDEIEKKLASLPEPRDERKIKEIDRELQKKKEELNAVRRQAESLSENGAAMAVEPTQIQLSKRWREIESNFAQFRRLNFAQIHTLHEETMVVTTEDMPLDVSYVPSTYLTEISHILQALSEVEQLLNAPELNAKDFEDLFKQEESLKNIKENLQQISGRIDVIHKKKTAALQSATPMERVKLQEAVSQMDFHWEKLNRMYKERQGRFDRSVEKWRHFHYDMKVFNQWLNDVEQFFKKTQNPENWEHAKYKWYLKELQDGIGQRQAVVRTLNATGEEIIQQSSKTDANILQEKLGSLSLRWHEVCKELAERRKRVEEQKNVFSEFQRDLNEFVSWLEEADNIATTPPGDEEQLKEKLEQVKLLTEELPLRQGILKQLNETGGAVLVSAPIRPEEQDKLEKKLKQTNLQWIKVSRALPEKQGELEVHIKDFRQFEEQLDHLLLWLSPIRNQLEIYNQPSQPGPFDLKETEVTVQAKQPDVERLLSKGQHLYKEKPSTQPVKRKLEDLRSEWEAVNHLLWELRTKQPDRAPGLSTTGASASQTVTVVTQPVDTKETVISKLEMPSSLLLEVPALADFNRAWTELTDWLSLLDRVIKSQRVMVGDLEDINEMIIKQKATLQDLEQRRPQLEELITAAQNLKNKTSNQEARTIITDRIERIQIQWDEVQEQLQNRRQQLNEMLKDSTQWLEAKEEAEQVIGQARGKLDSWKEGPHTMDAIQKKITETKQLAKDLRQRQINVDVANDLALKLLRDYSADDTRKVHMITENINTSWGNILKRVSEREAALEETQRLLQQFPLDLEKFLAWITEAETTANVLQDASRKEKLLEDSRGVRELMKPWQDLQGEIEAHTDIYHNLDENGQKILRSLEGSDEAPLLQRRLDNMNFKWSELRKKSLNIRSHLEVSSDQWKRLHLSLQELLVWLQLKDDELSRQAPIGGDFPAVQKQNDVHRAFKRELKTKEPVIMSTLETVRIFLTEQPLEGLEKLYQEPRELPPEERAQNVTRLLRKQAEEVNTEWDKLNLHSADWQRKIDEALERLQELQEAADELDLKLRQAEVIKGSWQPVGDLLIDSLQDHLEKVKALRGEIAPLKENVNHVNDLAHHLTTLGIQLSPYNLSILEDLNTRWRLLQVAVEDRVRQLHEAHRDFGPASQHFLSTSVQGPWERAISPNKVPYYINHETQTTCWDHPKMTELYQSLADLNNVRFSAYRTAMKLRRLQKALCLDLLSLSAACDALDQHNLKQNDQPMDILQIINCLTTIYDRLEQEHNNLVNVPLCVDMCLNWLLNVYDTGRTGRIRVLSFKTGIISLCKAHLEDKYRYLFKQVASSTGFCDQRRLGLLLHDSIQIPRQLGEVASFGGSNIEPSVRSCFQFANNKPEIEAALFLDWMRLEPQSMVWLPVLHRVAAAETAKHQAKCNICKECPIIGFRYRSLKHFNYDICQSCFFSGRVAKGHKMHYPMVEYCTPTTSGEDVRDFAKVLKNKFRTKRYFAKHPRMGYLPVQTVLEGDNMETPVTLINFWPVDSAPASSPQLSHDDTHSRIEHYASRLAEMENSNGSYLNDSISPNESIDDEHLLIQHYCQSLNQDSPLSQPRSPAQILISLESEERGELERILADLEEENRNLQAEYDRLKQQHEHKGLSPLPSPPEMMPTSPQSPRDAELIAEAKLLRQHKGRLEARMQILEDHNKQLESQLHRLRQLLEQPQAEAKVNGTTVSSPSTSLQRSDSSQPMLLRVVGSQTSESMGEEDLLSPPQDTSTGLEEVMEQLNNSFPSSRGRNAPGKPMREDTM.

Residues 1-240 (MLWWEEVEDC…YITSLFQVLP (240 aa)) form an actin-binding region. Calponin-homology (CH) domains follow at residues 15–119 (DVQK…LHWQ) and 134–240 (TNSE…QVLP). An ANK2- and ANK-3 binding region spans residues 63–72 (PKEKGSTRVH). 23 Spectrin repeats span residues 342–447 (LDSY…SNLH), 451–557 (MDLQ…LLQD), 560–668 (LKWQ…QISQ), 728–828 (DITE…NWLE), 831–935 (NNII…ELQT), 944–1046 (RYQE…KLEE), 1049–1154 (NKLR…EALK), 1163–1264 (LQKD…TLEE), 1268–1464 (CWHE…LFQK), 1469–1569 (EQRL…QLEK), 1573–1676 (LSRK…NLLL), 1680–1777 (KHME…TGKA), 1779–1875 (IPLK…KALE), 1878–1980 (HQWY…TLHE), 2001–2098 (YLTE…ERQG), 2106–2209 (KWRH…RVEE), 2215–2316 (SEFQ…GELE), 2317–2415 (VHIK…LRTK), 2465–2569 (ADFN…QLNE), 2576–2678 (QWLE…ALEE), 2682–2786 (LLQQ…KKSL), 2800–2922 (KRLH…RKID), and 2927–3032 (RLQE…QLHE). The tract at residues 1416–1914 (SDLTSHEISL…PEPRDERKIK (499 aa)) is interaction with SYNM. A WW domain is found at 3047 to 3080 (TSVQGPWERAISPNKVPYYINHETQTTCWDHPKM). Positions 3050 to 3400 (QGPWERAISP…TVLEGDNMET (351 aa)) are interaction with SYNM. Residues 3300–3356 (KHQAKCNICKECPIIGFRYRSLKHFNYDICQSCFFSGRVAKGHKMHYPMVEYCTPTT) form a ZZ-type; degenerate zinc finger. Residues Cys3305, Cys3308, Cys3329, and Cys3332 each contribute to the Zn(2+) site. Residues 3458–3510 (DDEHLLIQHYCQSLNQDSPLSQPRSPAQILISLESEERGELERILADLEEENR) are binds to SNTB1. 3 positions are modified to phosphoserine: Ser3475, Ser3482, and Ser3492. Disordered regions lie at residues 3520–3546 (KQQHEHKGLSPLPSPPEMMPTSPQSPR) and 3595–3677 (EAKV…EDTM). Composition is skewed to polar residues over residues 3599 to 3618 (NGTTVSSPSTSLQRSDSSQP) and 3654 to 3664 (QLNNSFPSSRG). 6 positions are modified to phosphoserine: Ser3604, Ser3605, Ser3609, Ser3615, Ser3616, and Ser3658.

Interacts with SYNM. Interacts with the syntrophins SNTG1 and SNTG2. Interacts with KRT19. Component of the dystrophin-associated glycoprotein complex which is composed of three subcomplexes: a cytoplasmic complex comprised of DMD (or UTRN), DTNA and a number of syntrophins, such as SNTB1, SNTB2, SNTG1 and SNTG2, the transmembrane dystroglycan complex, and the sarcoglycan-sarcospan complex. Interacts with DAG1 (betaDAG1) with DMD; the interaction is inhibited by phosphorylation on the PPXY motif of DAG1. Interacts with SYNM; SNTA1 and SNTB1. Interacts with CMYA5. Directly interacts with ANK2 and ANK3; these interactions do not interfere with betaDAG1-binding and are necessary for proper localization in muscle cells. Identified in a dystroglycan complex that contains at least PRX, DRP2, UTRN, DMD and DAG1. Interacts with DTNB. Interacts with PGM5; the interaction is direct. Interacts with NOS1; localizes NOS1 to sarcolemma in muscle cells. Strongly expressed in skeletal muscle and weak expression observed in newborn brain which increases in adult brain.

The protein localises to the cell membrane. Its subcellular location is the sarcolemma. It is found in the cytoplasm. It localises to the cytoskeleton. The protein resides in the postsynaptic cell membrane. Its function is as follows. Anchors the extracellular matrix to the cytoskeleton via F-actin. Ligand for dystroglycan. Component of the dystrophin-associated glycoprotein complex which accumulates at the neuromuscular junction (NMJ) and at a variety of synapses in the peripheral and central nervous systems and has a structural function in stabilizing the sarcolemma. Also implicated in signaling events and synaptic transmission. This is Dystrophin (Dmd) from Rattus norvegicus (Rat).